Consider the following 908-residue polypeptide: AdoMet-dependent rRNA methyltransferase SPB1 (908 aa).

The S-adenosyl-L-methionine site is built by Gly57, Trp59, Asp77, Asp93, and Asp118. Lys158 (proton acceptor) is an active-site residue. The stretch at 378-422 (MDEEEQITEELQKLQQAKLAKTKRERKRANEKKARELLKLQLNMT) forms a coiled coil. Disordered regions lie at residues 440–513 (IFDL…YDSY), 535–715 (NFDA…DEVK), and 806–841 (AKGR…EKAR). Residues 464–493 (DDGEGMDLASESEEEEDEDEEDDEVLDSDE) show a composition bias toward acidic residues. Over residues 535 to 545 (NFDAWHGIQEK) the composition is skewed to basic and acidic residues. 2 stretches are compositionally biased toward acidic residues: residues 546 to 564 (SDEE…EEGG) and 579 to 591 (DSSD…EPET). Residues 592 to 610 (EVPKKIKKVSFEKPARSEK) show a composition bias toward basic and acidic residues. Acidic residues-rich tracts occupy residues 650-678 (DGDD…EDAS) and 685-712 (EGDD…EDQD). The span at 816 to 827 (ARMEKAKKKADG) shows a compositional bias: basic and acidic residues.

It belongs to the class I-like SAM-binding methyltransferase superfamily. RNA methyltransferase RlmE family. SPB1 subfamily. In terms of assembly, component of the nucleolar and nucleoplasmic pre-60S ribosomal particle.

The protein resides in the nucleus. It is found in the nucleolus. It catalyses the reaction a ribonucleotide in rRNA + S-adenosyl-L-methionine = a 2'-O-methylribonucleotide in rRNA + S-adenosyl-L-homocysteine + H(+). Its function is as follows. Required for proper assembly of pre-ribosomal particles during the biogenesis of the 60S ribosomal subunit. The chain is AdoMet-dependent rRNA methyltransferase SPB1 from Cryptococcus neoformans var. neoformans serotype D (strain B-3501A) (Filobasidiella neoformans).